We begin with the raw amino-acid sequence, 206 residues long: Ribosomal RNA large subunit methyltransferase E (206 aa).

S-adenosyl-L-methionine is bound by residues Gly-63, Trp-65, Asp-83, Asp-99, and Asp-124. Residue Lys-164 is the Proton acceptor of the active site.

Belongs to the class I-like SAM-binding methyltransferase superfamily. RNA methyltransferase RlmE family.

The protein resides in the cytoplasm. The enzyme catalyses uridine(2552) in 23S rRNA + S-adenosyl-L-methionine = 2'-O-methyluridine(2552) in 23S rRNA + S-adenosyl-L-homocysteine + H(+). In terms of biological role, specifically methylates the uridine in position 2552 of 23S rRNA at the 2'-O position of the ribose in the fully assembled 50S ribosomal subunit. The protein is Ribosomal RNA large subunit methyltransferase E of Buchnera aphidicola subsp. Schizaphis graminum (strain Sg).